Here is a 255-residue protein sequence, read N- to C-terminus: Protein N-terminal and lysine N-methyltransferase efm7 (255 aa).

A disordered region spans residues 1 to 25; it reads MADNDFEGFGIFEEPEGFRPSTPPP. Residues tryptophan 58, 84–86, aspartate 106, tryptophan 137, and serine 162 each bind S-adenosyl-L-methionine; that span reads GAG.

Belongs to the class I-like SAM-binding methyltransferase superfamily. EFM7 family.

It is found in the cytoplasm. Its function is as follows. S-adenosyl-L-methionine-dependent protein methyltransferase that trimethylates the N-terminal glycine 'Gly-2' of elongation factor 1-alpha, before also catalyzing the mono- and dimethylation of 'Lys-3'. The protein is Protein N-terminal and lysine N-methyltransferase efm7 of Schizosaccharomyces pombe (strain 972 / ATCC 24843) (Fission yeast).